We begin with the raw amino-acid sequence, 141 residues long: Hemoglobin subunit alpha-A (141 aa).

The Globin domain maps to 1–141 (VLSPADKSNV…VGTVLTAKYR (141 aa)). Residue H58 coordinates O2. A heme b-binding site is contributed by H87.

The protein belongs to the globin family. Heterotetramer of two alpha chains and two beta chains. In terms of tissue distribution, red blood cells.

Functionally, involved in oxygen transport from the lung to the various peripheral tissues. The sequence is that of Hemoglobin subunit alpha-A (HBAA) from Passer montanus (Eurasian tree sparrow).